Here is a 302-residue protein sequence, read N- to C-terminus: Ribosomal RNA small subunit methyltransferase H (302 aa).

S-adenosyl-L-methionine-binding positions include 43-45 (GGH), Asp62, Phe89, Asp105, and His112. A disordered region spans residues 276 to 302 (EIANNPRSRSAKLRIAEKQAETGDEDN).

The protein belongs to the methyltransferase superfamily. RsmH family.

It localises to the cytoplasm. The enzyme catalyses cytidine(1402) in 16S rRNA + S-adenosyl-L-methionine = N(4)-methylcytidine(1402) in 16S rRNA + S-adenosyl-L-homocysteine + H(+). Specifically methylates the N4 position of cytidine in position 1402 (C1402) of 16S rRNA. This is Ribosomal RNA small subunit methyltransferase H from Nostoc sp. (strain PCC 7120 / SAG 25.82 / UTEX 2576).